Here is a 141-residue protein sequence, read N- to C-terminus: Hemoglobin subunit alpha-A (141 aa).

A Globin domain is found at 1-141 (VLNAGDKANV…VGTVLTSKYR (141 aa)). H58 is an O2 binding site. Heme b is bound at residue H87.

This sequence belongs to the globin family. Heterotetramer of two alpha chains and two beta chains. In terms of tissue distribution, red blood cells.

Involved in oxygen transport from the lung to the various peripheral tissues. The protein is Hemoglobin subunit alpha-A (HBAA) of Chrysemys picta bellii (Western painted turtle).